A 427-amino-acid polypeptide reads, in one-letter code: Trigger factor (427 aa).

One can recognise a PPIase FKBP-type domain in the interval 163 to 248 (GDTVVIDFVG…IHEVKEKEVP (86 aa)).

This sequence belongs to the FKBP-type PPIase family. Tig subfamily.

The protein resides in the cytoplasm. The enzyme catalyses [protein]-peptidylproline (omega=180) = [protein]-peptidylproline (omega=0). Its function is as follows. Involved in protein export. Acts as a chaperone by maintaining the newly synthesized protein in an open conformation. Functions as a peptidyl-prolyl cis-trans isomerase. The chain is Trigger factor from Streptococcus gordonii (strain Challis / ATCC 35105 / BCRC 15272 / CH1 / DL1 / V288).